We begin with the raw amino-acid sequence, 162 residues long: Phosphopantetheine adenylyltransferase (162 aa).

Ser9 provides a ligand contact to substrate. ATP-binding positions include Ser9 to Phe10 and His17. Positions 41, 73, and 87 each coordinate substrate. ATP contacts are provided by residues Gly88–Arg90, Glu98, and Tyr123–Ser129.

The protein belongs to the bacterial CoaD family. Homohexamer. Mg(2+) is required as a cofactor.

It localises to the cytoplasm. It carries out the reaction (R)-4'-phosphopantetheine + ATP + H(+) = 3'-dephospho-CoA + diphosphate. The protein operates within cofactor biosynthesis; coenzyme A biosynthesis; CoA from (R)-pantothenate: step 4/5. In terms of biological role, reversibly transfers an adenylyl group from ATP to 4'-phosphopantetheine, yielding dephospho-CoA (dPCoA) and pyrophosphate. This is Phosphopantetheine adenylyltransferase from Symbiobacterium thermophilum (strain DSM 24528 / JCM 14929 / IAM 14863 / T).